A 1045-amino-acid chain; its full sequence is Probable sucrose-phosphate synthase (1045 aa).

2 stretches are compositionally biased toward basic and acidic residues: residues 93-115 and 124-137; these read ENEE…REAT and EGEK…DSTR. Disordered regions lie at residues 93 to 141, 222 to 243, and 662 to 692; these read ENEE…PRLP, WSYG…DDDD, and IASS…SDSL. Residues 664–674 show a composition bias toward low complexity; sequence SSRQRQPQWQR.

The protein belongs to the glycosyltransferase 1 family. In terms of assembly, homodimer or homotetramer. In terms of tissue distribution, predominantly active in tap root.

The catalysed reaction is beta-D-fructose 6-phosphate + UDP-alpha-D-glucose = sucrose 6(F)-phosphate + UDP + H(+). It participates in glycan biosynthesis; sucrose biosynthesis; sucrose from D-fructose 6-phosphate and UDP-alpha-D-glucose: step 1/2. With respect to regulation, activity is regulated by phosphorylation and moderated by concentration of metabolites and light. Functionally, plays a role in photosynthetic sucrose synthesis by catalyzing the rate-limiting step of sucrose biosynthesis from UDP-glucose and fructose- 6-phosphate. Involved in the regulation of carbon partitioning in the leaves of plants. May regulate the synthesis of sucrose and therefore play a major role as a limiting factor in the export of photoassimilates out of the leaf. Plays a role for sucrose availability that is essential for plant growth and fiber elongation. The protein is Probable sucrose-phosphate synthase (SPS) of Beta vulgaris (Sugar beet).